Here is a 408-residue protein sequence, read N- to C-terminus: UPF0761 membrane protein azo3165 (408 aa).

A run of 7 helical transmembrane segments spans residues 29–49 (LAFT…GVFG), 92–112 (LTLI…ATIE), 131–151 (ITVS…SVVA), 172–192 (IAAA…LYYA), 197–217 (PVRL…FLLM), 220–240 (GLGL…TFAA), and 241–261 (LPIF…GALI).

The protein belongs to the UPF0761 family.

The protein resides in the cell inner membrane. The protein is UPF0761 membrane protein azo3165 of Azoarcus sp. (strain BH72).